The sequence spans 266 residues: Biotin--[acetyl-CoA-carboxylase] ligase (266 aa).

A BPL/LPL catalytic domain is found at 14 to 202 (RSLRDQLIGA…ELEARIIQWR (189 aa)). Biotin contacts are provided by residues 38–39 (ST), Q63, R67, and K138.

This sequence belongs to the biotin--protein ligase family. Monomer in solution. Forms dimers under specific crystallization conditions.

The enzyme catalyses biotin + L-lysyl-[protein] + ATP = N(6)-biotinyl-L-lysyl-[protein] + AMP + diphosphate + H(+). It carries out the reaction biotin + ATP + H(+) = biotinyl-5'-AMP + diphosphate. It catalyses the reaction biotinyl-5'-AMP + L-lysyl-[protein] = N(6)-biotinyl-L-lysyl-[protein] + AMP + 2 H(+). With respect to regulation, binding of biotin and ATP significantly increases the thermal stability of BirA and leads to the formation of a high affinity holoenzyme complex. Catalyzes the transfer of biotin onto a conserved lysine residue of the biotin carboxyl carrier protein (BCCP) domain of acetyl-CoA carboxylase and converts it to active holo-BCCP. Forms an acyl-adenylate intermediate. Cannot use GTP or desthiobiotin. The chain is Biotin--[acetyl-CoA-carboxylase] ligase from Mycobacterium tuberculosis (strain ATCC 25618 / H37Rv).